Reading from the N-terminus, the 426-residue chain is uncharacterized protein (426 aa).

The tract at residues 23–42 (ENPRPTNNPSTSHPSDSYST) is disordered. Positions 26 to 42 (RPTNNPSTSHPSDSYST) are enriched in polar residues.

The protein belongs to the serpin family.

This is an uncharacterized protein from Thermococcus kodakarensis (strain ATCC BAA-918 / JCM 12380 / KOD1) (Pyrococcus kodakaraensis (strain KOD1)).